The primary structure comprises 398 residues: Flavin-containing monooxygenase ustF1 (398 aa).

The N-terminal stretch at 1–22 (MTVSQVRRVAVIGAGISGVVST) is a signal peptide. Residue 13–18 (GAGISG) coordinates FAD. N-linked (GlcNAc...) asparagine glycosylation is found at N53, N57, N119, and N126. 194 to 199 (GGGVSS) contacts NADP(+). 3 N-linked (GlcNAc...) asparagine glycosylation sites follow: N236, N243, and N271.

This sequence belongs to the FMO family.

It participates in mycotoxin biosynthesis. In terms of biological role, flavin-containing monooxygenase; part of the gene cluster that mediates the biosynthesis of the secondary metabolite ustiloxin B, an antimitotic tetrapeptide. First, ustA is processed by the subtilisin-like endoprotease Kex2 that is outside the ustiloxin B gene cluster, at the C-terminal side of Arg-Lys, after transfer to Golgi apparatus through the endoplasmic reticulum (ER). Cleavage by KEX2 generates 16 peptides YAIG-I to YAIG-XVI. To process the precursor peptide further, at least two peptidases are necessary to cleave the N-terminal and C-terminal sides of the Tyr-Ala-Ile-Gly core peptide which serves as backbone for the synthesis of ustiloxin B, through cyclization and modification of the tyrosine with a non-protein coding amino acid, norvaline. One of the two peptidases must be the serine peptidase ustP; and the other pepdidase is probably ustH. Macrocyclization of the core peptide derived from ustA requires the tyrosinase ustQ, as well as the homologous oxidases ustYa and ustYb, and leads to the production of the first cyclization product N-desmethylustiloxin F. For the formation of N-desmethylustiloxin F, three oxidation steps are required, hydroxylation at the benzylic position, hydroxylation at either the aromatic ring of Tyr or beta-position of Ile, and oxidative cyclization. UstQ may catalyze the oxidation of a phenol moiety, whereas the ustYa and ustYb are most likely responsible for the remaining two-step oxidations. N-desmethylustiloxin F is then methylated by ustM to yield ustiloxin F which in turn substrate of the cytochrome P450 monooxygenase ustC which catalyzes the formation of S-deoxyustiloxin H. The flavoprotein monooxygenases ustF1 and ustF2 then participate in the modification of the side chain of S-deoxyustiloxin H, leading to the synthesis of an oxime intermediate, via ustiloxin H. Finally, carboxylative dehydration performed by the cysteine desulfurase-like protein ustD yields ustiloxin B. The protein is Flavin-containing monooxygenase ustF1 of Aspergillus flavus (strain ATCC 200026 / FGSC A1120 / IAM 13836 / NRRL 3357 / JCM 12722 / SRRC 167).